Here is a 203-residue protein sequence, read N- to C-terminus: MIRALKANGTDQRVLNAMKKVPRHLFLPEDMQSFAYADTPLPIGYDQTISAPHMVAIMCDLLKITEGMTILEIGSGSGYNAAVMAELAGENGKVYTVERIPELVDLARNNLERAGYSNVTVVHDDGSCGLPEHAPYDRIAVTSVAPEVPPPLREQLSKNGIMVIPVGTQYQTLVVVKKDSKGNITHKAMGEVIFVPLIGKYGF.

Ser-50 is a catalytic residue.

Belongs to the methyltransferase superfamily. L-isoaspartyl/D-aspartyl protein methyltransferase family.

The protein resides in the cytoplasm. The enzyme catalyses [protein]-L-isoaspartate + S-adenosyl-L-methionine = [protein]-L-isoaspartate alpha-methyl ester + S-adenosyl-L-homocysteine. Catalyzes the methyl esterification of L-isoaspartyl residues in peptides and proteins that result from spontaneous decomposition of normal L-aspartyl and L-asparaginyl residues. It plays a role in the repair and/or degradation of damaged proteins. In Methanococcoides burtonii (strain DSM 6242 / NBRC 107633 / OCM 468 / ACE-M), this protein is Protein-L-isoaspartate O-methyltransferase.